The chain runs to 73 residues: Metallothionein (73 aa).

Residues cysteine 15, cysteine 20, cysteine 26, cysteine 28, cysteine 32, cysteine 34, cysteine 39, cysteine 46, cysteine 48, cysteine 52, cysteine 54, cysteine 58, cysteine 64, cysteine 66, cysteine 70, and cysteine 72 each contribute to the Cd(2+) site.

The protein belongs to the metallothionein superfamily. Type 2 family.

The metallothioneins are involved in the cellular sequestration of toxic metal ions. This chain is Metallothionein, found in Dreissena polymorpha (Zebra mussel).